The following is a 612-amino-acid chain: MSKNKKMSLSGGDTTEKFIYKPKDLIWAKMKGFTPWPGMIVEPPLDLLTQQRRANTKCVFFFGSRNFAWIEENNIKPFEGPWKEELAKVSKPAAFRHAMADIDKYIDDPAEVDDQINESCGVPNHATEADFDKIRDAVDSDENAVDADADANNGVVVHVVGSPDVSEAVEGENNADSSASPTVTAATPATAKSPAKRTPKAKPVSAVSATKAAKASTTKSAQKRRISAHQTPTGANTSGLPNAKRGKRVVSGGATPGNFDGASSSSPTARRRVEVDDLLASLAAKRAPNAIALLDRPVVTRPETQAIDMNSRSNTLADRDIVPSELTFGFLGLGMMGSTIVKDLIYTGHKVVVWNRTIDKCQPFVEAGAEVKDTPMDVVEAADIIFCCVSDPKGAKDLVFGNCGVLQLKDLRNKAYVEMSTVDPDTSLDIGEGIKQCNGRYLEAQIHGSRQEAADGMLIILAGGDRTVFEECHSCFKTIAKNTFFLGNVGNACKVNLILQTIQAVSLVGLAEALALADRFSISLNDIIDIFDLTSMKSPLLLAKGKEMAKGDFNPQQPLSHMQRDLRLVLNMAENLDQSMPVTSITNEVFKHTKRLGYSEHDSSAVFVRSRF.

Residues 22–81 (PKDLIWAKMKGFTPWPGMIVEPPLDLLTQQRRANTKCVFFFGSRNFAWIEENNIKPFEGP) enclose the PWWP domain. Residues 168–270 (AVEGENNADS…GASSSSPTAR (103 aa)) form a disordered region. Composition is skewed to low complexity over residues 177–193 (SSASPTVTAATPATAKS) and 201–220 (AKPVSAVSATKAAKASTTKS). Polar residues predominate over residues 228 to 240 (AHQTPTGANTSGL). The tract at residues 276 to 279 (DDLL) is interaction with histone H3. Residues 319–612 (RDIVPSELTF…SSAVFVRSRF (294 aa)) are dehydrogenase domain. NAD(+) contacts are provided by residues 329–343 (GFLGLGMMGSTIVKD), Thr-421, and Arg-564.

Belongs to the HIBADH-related family. NP60 subfamily. As to quaternary structure, binds to mononucleosomes. Interacts with male-specific lethal (MSL) histone acetyltransferase complex at least composed of mof, msl-1, msl-2 and msl-3.

It localises to the chromosome. Its function is as follows. Nucleosome-destabilizing factor that is recruited to genes during transcriptional activation and colocalizes with a subset of trimethylated 'Lys-36' histone H3 (H3K36me3)-enriched regions. Binds DNA (in vitro). Facilitates Pol II transcription through nucleosomes. Facilitates male-specific lethal (MSL) histone acetyltransferase complex targeting to active genes on the X chromosome. Stimulates the acetylation of 'Lys-56' of nucleosomal histone H3 (H3K56ac) by nej. This chain is Cytokine-like nuclear factor N-PAC, found in Drosophila pseudoobscura pseudoobscura (Fruit fly).